The chain runs to 204 residues: Proteasome subunit beta type-3 (204 aa).

The protein belongs to the peptidase T1B family. As to quaternary structure, the 26S proteasome consists of a 20S proteasome core and two 19S regulatory subunits. The 20S proteasome core is composed of 28 subunits that are arranged in four stacked rings, resulting in a barrel-shaped structure. The two end rings are each formed by seven alpha subunits, and the two central rings are each formed by seven beta subunits. The catalytic chamber with the active sites is on the inside of the barrel.

Its subcellular location is the cytoplasm. It localises to the nucleus. Functionally, non-catalytic component of the proteasome, a multicatalytic proteinase complex which is characterized by its ability to cleave peptides with Arg, Phe, Tyr, Leu, and Glu adjacent to the leaving group at neutral or slightly basic pH. The proteasome has an ATP-dependent proteolytic activity. The polypeptide is Proteasome subunit beta type-3 (PBC1) (Picea mariana (Black spruce)).